A 412-amino-acid polypeptide reads, in one-letter code: Glucose/galactose transporter (412 aa).

The next 11 membrane-spanning stretches (helical) occupy residues 21–41, 62–82, 90–110, 113–133, 158–178, 192–212, 239–259, 310–330, 331–351, 363–383, and 388–408; these read YGFALTSLTLLFFMWGFITCL, LIQFCFFGAYFIVSLPAGQLV, GIVVGLIVAAIGCALFIPAAS, VYALFLGALFVLASGVTILQV, FNSLGTTVAPVFGAVLILSAA, FPYLLLALAFTVLAIIFAILK, LGAIGIFVYVGAEVSVGSFLV, AFVAIILLFITVATTGHIAMW, SVLAIGLFNSIMFPTIFSLAL, GILCLAIVGGAIVPLIQGALA, and IHLAFLMPIICYAYIAFYGLI.

It belongs to the major facilitator superfamily. FHS transporter (TC 2.A.1.7) family.

Its subcellular location is the cell inner membrane. In terms of biological role, intake of glucose and galactose. In Brucella abortus (strain 2308), this protein is Glucose/galactose transporter (gluP).